The following is a 199-amino-acid chain: uncharacterized protein (199 aa).

This is an uncharacterized protein from Methanocaldococcus jannaschii (strain ATCC 43067 / DSM 2661 / JAL-1 / JCM 10045 / NBRC 100440) (Methanococcus jannaschii).